The following is a 454-amino-acid chain: Notoamide biosynthesis cluster protein M' (454 aa).

N51 and N74 each carry an N-linked (GlcNAc...) asparagine glycan. A compositionally biased stretch (basic residues) spans K205 to K219. The tract at residues K205–H224 is disordered. The next 2 helical transmembrane spans lie at M334–F354 and F375–V395.

The protein localises to the membrane. Part of the gene cluster that mediates the biosynthesis of notoamide, a fungal indole alkaloid that belongs to a family of natural products containing a characteristic bicyclo[2.2.2]diazaoctane core. The first step of notoamide biosynthesis involves coupling of L-proline and L-tryptophan by the bimodular NRPS notE', to produce cyclo-L-tryptophan-L-proline called brevianamide F. The reverse prenyltransferase notF' then acts as a deoxybrevianamide E synthase and converts brevianamide F to deoxybrevianamide E via reverse prenylation at C-2 of the indole ring leading to the bicyclo[2.2.2]diazaoctane core. Deoxybrevianamide E is further hydroxylated at C-6 of the indole ring, likely catalyzed by the cytochrome P450 monooxygenase notG', to yield 6-hydroxy-deoxybrevianamide E. 6-hydroxy-deoxybrevianamide E is a specific substrate of the prenyltransferase notC' for normal prenylation at C-7 to produce 6-hydroxy-7-prenyl-deoxybrevianamide, also called notoamide S. As the proposed pivotal branching point in notoamide biosynthesis, notoamide S can be diverted to notoamide E through an oxidative pyran ring closure putatively catalyzed by either notH' cytochrome P450 monooxygenase or the notD' FAD-linked oxidoreductase. This step would be followed by an indole 2,3-epoxidation-initiated pinacol-like rearrangement catalyzed by the notB' FAD-dependent monooxygenase leading to the formation of notoamide C and notoamide D. On the other hand notoamide S is converted to notoamide T by notH' (or notD'), a bifunctional oxidase that also functions as the intramolecular Diels-Alderase responsible for generation of (-)-notoamide T. To generate antipodal (+)-notoaminide T, notH (or notD) in Aspergillus strain MF297-2 is expected to catalyze a Diels-Alder reaction leading to the opposite stereochemistry. The remaining oxidoreductase notD' (or notH') likely catalyzes the oxidative pyran ring formation to yield (-)-stephacidin A. The FAD-dependent monooxygenase notI' is highly similar to notB' and is predicted to catalyze a similar conversion from (-)-stephacidin A to (+)-notoamide B via the 2,3-epoxidation of (-)-stephacidin A followed by a pinacol-type rearrangement. Finally, it remains unclear which enzyme could be responsible for the final hydroxylation steps leading to notoamide A and sclerotiamide. The function of notM' in the notoamide biosynthesis has not been determined yet. The sequence is that of Notoamide biosynthesis cluster protein M' from Aspergillus versicolor.